Reading from the N-terminus, the 360-residue chain is UPF0283 membrane protein Asuc_0957 (360 aa).

3 consecutive transmembrane segments (helical) span residues 74 to 94 (VIAV…QWLI), 102 to 122 (WIYF…LSAL), and 215 to 235 (AVEN…MLFL).

The protein belongs to the UPF0283 family.

Its subcellular location is the cell inner membrane. This Actinobacillus succinogenes (strain ATCC 55618 / DSM 22257 / CCUG 43843 / 130Z) protein is UPF0283 membrane protein Asuc_0957.